The chain runs to 303 residues: N-acetyl-D-glucosamine kinase (303 aa).

ATP contacts are provided by residues Gly4–Lys11 and Gly133–Phe140. Zn(2+) is bound by residues His157, Cys177, Cys179, and Cys184.

Belongs to the ROK (NagC/XylR) family. NagK subfamily.

The catalysed reaction is N-acetyl-D-glucosamine + ATP = N-acetyl-D-glucosamine 6-phosphate + ADP + H(+). It participates in cell wall biogenesis; peptidoglycan recycling. Functionally, catalyzes the phosphorylation of N-acetyl-D-glucosamine (GlcNAc) derived from cell-wall degradation, yielding GlcNAc-6-P. This is N-acetyl-D-glucosamine kinase from Escherichia coli O127:H6 (strain E2348/69 / EPEC).